Reading from the N-terminus, the 749-residue chain is MTIRSPEPEVKILVDIDPVPTSFERWAKPGHFARSLAKGPSTTTWIWDLHADAHDFDSHTSDLEEISRKVFSAHFGQLAVIFIWLSGMYFHGARFSNYEAWLSDPTHIKPSAQVVWPIVGQEILNGDVGGGFQGIQITSGFFQIWRAAGVTSELQLYATAIGGLVMATLMLIAGWFHYHKAAPKLAWFQDVESMLNHHLAGLLGLGSLSWAGHQIHVSLPINQLLDAGVDPKEIPLPHEFLLNRDLLAQLYPSFSKGLTPFFSLNWSEYSDFLTFRGGLNPVTGGLWLTDTAHHHLAIAVLFIVAGHMYRTNWGIGHSLREILEAHKGPFTGEGHKGLYEILTTSWHAQLAINLATLGSLTIIVAHHMYSMPPYPYLATDYGTQLSLFTHHMWIGGFCVVGAGAHAAIFLVRDYDPTTQYNNLLDRVLRHRDAIISHLNWVCIFLGFHSFGLYIHNDTMSALGRPQDMFSDTAIQLQPVFAQWIQNTHAAAPGFTAPNAAAATSLTWGGSDLVAVGGKVAMMPIPLGTADFLVHHIHAFTIHVTVLILLKGVLFSRSSRLIPDKANLGFRFPCDGPGRGGTCQVSAWDHVFLGLFWMYNAISVVIFHFSWKMQSDVWGSVTAKGVSHITGGNFAQSATTINGWLRDFLWAQASQVIQSYGSSLSAYGLVFLGAHFIWAFSLMFLFSGRGYWQELIESIVWAHNKLKVAPAIQPRALSIIQGRAVGVAHYLLGGIATTWAFFLARIIAVG.

The next 8 membrane-spanning stretches (helical) occupy residues Val-70–Ala-93, Leu-156–His-179, Leu-195–Leu-219, Thr-291–Tyr-309, Trp-346–Tyr-369, Leu-385–Val-411, Ala-433–His-455, and Phe-531–Leu-549. Cys-573 and Cys-582 together coordinate [4Fe-4S] cluster. Helical transmembrane passes span His-589–Trp-610 and Leu-663–Phe-685. Position 674 (His-674) interacts with chlorophyll a'. Met-682 and Tyr-690 together coordinate chlorophyll a. Trp-691 is a phylloquinone binding site. The chain crosses the membrane as a helical span at residues Ala-723–Ala-743.

This sequence belongs to the PsaA/PsaB family. The PsaA/B heterodimer binds the P700 chlorophyll special pair and subsequent electron acceptors. PSI consists of a core antenna complex that captures photons, and an electron transfer chain that converts photonic excitation into a charge separation. The eukaryotic PSI reaction center is composed of at least 11 subunits. Requires P700 is a chlorophyll a/chlorophyll a' dimer, A0 is one or more chlorophyll a, A1 is one or both phylloquinones and FX is a shared 4Fe-4S iron-sulfur center. as cofactor.

It localises to the plastid. Its subcellular location is the chloroplast thylakoid membrane. It catalyses the reaction reduced [plastocyanin] + hnu + oxidized [2Fe-2S]-[ferredoxin] = oxidized [plastocyanin] + reduced [2Fe-2S]-[ferredoxin]. Functionally, psaA and PsaB bind P700, the primary electron donor of photosystem I (PSI), as well as the electron acceptors A0, A1 and FX. PSI is a plastocyanin-ferredoxin oxidoreductase, converting photonic excitation into a charge separation, which transfers an electron from the donor P700 chlorophyll pair to the spectroscopically characterized acceptors A0, A1, FX, FA and FB in turn. Oxidized P700 is reduced on the lumenal side of the thylakoid membrane by plastocyanin. In Zygnema circumcarinatum (Green alga), this protein is Photosystem I P700 chlorophyll a apoprotein A1.